The sequence spans 480 residues: Ribosomal RNA small subunit methyltransferase F (480 aa).

S-adenosyl-L-methionine is bound by residues 126-132, Glu150, Asp177, and Asp195; that span reads AAAPGSK. The active-site Nucleophile is the Cys248.

Belongs to the class I-like SAM-binding methyltransferase superfamily. RsmB/NOP family.

The protein resides in the cytoplasm. It carries out the reaction cytidine(1407) in 16S rRNA + S-adenosyl-L-methionine = 5-methylcytidine(1407) in 16S rRNA + S-adenosyl-L-homocysteine + H(+). In terms of biological role, specifically methylates the cytosine at position 1407 (m5C1407) of 16S rRNA. The sequence is that of Ribosomal RNA small subunit methyltransferase F from Cronobacter sakazakii (strain ATCC BAA-894) (Enterobacter sakazakii).